We begin with the raw amino-acid sequence, 68 residues long: C-hordein (68 aa).

Pro residues-rich tracts occupy residues 1–24 (YPQQ…PQQP) and 33–55 (PQQP…PLQP). The disordered stretch occupies residues 1 to 68 (YPQQPQPFPQ…YTQQTIWSMV (68 aa)). Residues 59–68 (YTQQTIWSMV) show a composition bias toward polar residues.

As to expression, developing endosperm.

In terms of biological role, sulfur-poor seed storage protein. The sequence is that of C-hordein from Hordeum vulgare (Barley).